Reading from the N-terminus, the 98-residue chain is Defensin-like protein 68 (98 aa).

A signal peptide spans 1-19 (MGSSKLLVALTLVVMITIS). Cystine bridges form between Cys-38–Cys-88, Cys-42–Cys-65, Cys-51–Cys-86, and Cys-55–Cys-87.

The protein belongs to the DEFL family.

It is found in the secreted. The polypeptide is Defensin-like protein 68 (Arabidopsis thaliana (Mouse-ear cress)).